A 1024-amino-acid polypeptide reads, in one-letter code: Non-canonical nonribosomal peptide synthetase FrzA (1024 aa).

Residues R29 to R425 form an adenylation (A) domain region. The 78-residue stretch at N534–L611 folds into the Carrier domain. S571 carries the O-(pantetheine 4'-phosphoryl)serine modification. In terms of domain architecture, Thioester reductase (TE) spans L655–I898.

The protein belongs to the NRP synthetase family. The cofactor is pantetheine 4'-phosphate.

It carries out the reaction L-tyrosinal + AMP + diphosphate + NADP(+) = L-tyrosine + ATP + NADPH + H(+). It participates in secondary metabolite biosynthesis. In terms of biological role, non-canonical nonribosomal peptide synthetase; part of the gene cluster that mediates the biosynthesis of the alkaloid (-)-FR901483, a potent immunosuppressant that shows efficacy in animal models and a probable inhibitor of purine nucleotide biosynthesis by targeting phosphoribosylpyrophosphate amidotransferase (PPAT). Within the pathway, FrzA catalyzes the reduction of L-tyrosine via its C-terminal reductase domain to produce L-tyrosinal. The biosynthesis of (-)-FR901483 starts with the condensation of two L-tyrosines to yield (S,S)-dityrosyl-piperazine. This process occurs in 3 steps with the non-canonical nonribosomal peptide synthetase FrzA catalyzing the reduction of L-tyrosine into L-tyrosinal, the spontaneous condensation of 2 L-tyrosinal units, and the subsequent reduction by the NmrA-like family domain-containing oxidoreductase FrzB. The cytochrome P450 monooxygenase FrzC then performs coupling between N10 and C1' to morph the piperazine into a 1,4-diazabicyclo[3.2.1]octane spiro-fused to a 2,5-cyclohexadienone. The dienone portion is further reduced to cyclohexanone by the flavin-dependent reductase FrzD. The methyltranserases (MTs) FrzE and FrzF are then involved in the methylation at the C10' amine and the C4 phenolic oxygen, respectively. The order of the two MTs appear to be interchangeable. Cleavage of the C9-N10' bond by the dioxygenase FrzG then leads to formation of a conjugated iminium. In addition to the oxidation of C9, an additional dehydrogenation between C7 and C8 can occur to give a likely shunt product. The next biosynthetic step is the intramolecular aldol condensation catalyzed by the newly identified aldolase FrzH to yield an aza-tricyclic product with the formation of a C9-C3' bond. The short-chain dehydrogenase/reductase FrzI then produces dephospho-(-)-FR901483 that is phosphorylated at C4'-OH into (-)-FR901483 by the phosphotransferase FrzJ. The chain is Non-canonical nonribosomal peptide synthetase FrzA from Cladobotryum sp.